We begin with the raw amino-acid sequence, 199 residues long: NAD(P)H dehydrogenase (quinone) (199 aa).

A Flavodoxin-like domain is found at Ile4–Val190. FMN contacts are provided by residues Ser10–Ile15 and Thr79–Phe81. Tyr12 contacts NAD(+). Trp99 contributes to the substrate binding site. Residues Ser114 to Gly119 and His134 each bind FMN.

It belongs to the WrbA family. FMN serves as cofactor.

It catalyses the reaction a quinone + NADH + H(+) = a quinol + NAD(+). The enzyme catalyses a quinone + NADPH + H(+) = a quinol + NADP(+). The sequence is that of NAD(P)H dehydrogenase (quinone) from Serratia proteamaculans (strain 568).